Consider the following 619-residue polypeptide: Chaperone protein HscA homolog (619 aa).

Belongs to the heat shock protein 70 family.

Its function is as follows. Chaperone involved in the maturation of iron-sulfur cluster-containing proteins. Has a low intrinsic ATPase activity which is markedly stimulated by HscB. This is Chaperone protein HscA homolog from Pseudomonas aeruginosa (strain UCBPP-PA14).